A 766-amino-acid chain; its full sequence is 5-methyltetrahydropteroyltriglutamate--homocysteine methyltransferase (766 aa).

Residues R16–K19 and K122 each bind 5-methyltetrahydropteroyltri-L-glutamate. L-homocysteine is bound by residues I443–S445 and E496. L-methionine-binding positions include I443–S445 and E496. 5-methyltetrahydropteroyltri-L-glutamate contacts are provided by residues R527–C528 and W573. D611 provides a ligand contact to L-homocysteine. D611 is a binding site for L-methionine. Residue E617 participates in 5-methyltetrahydropteroyltri-L-glutamate binding. Residues H653, C655, and E677 each coordinate Zn(2+). The active-site Proton donor is the H706. C738 contacts Zn(2+).

The protein belongs to the vitamin-B12 independent methionine synthase family. Requires Zn(2+) as cofactor.

It carries out the reaction 5-methyltetrahydropteroyltri-L-glutamate + L-homocysteine = tetrahydropteroyltri-L-glutamate + L-methionine. The protein operates within amino-acid biosynthesis; L-methionine biosynthesis via de novo pathway; L-methionine from L-homocysteine (MetE route): step 1/1. In terms of biological role, catalyzes the transfer of a methyl group from 5-methyltetrahydrofolate to homocysteine resulting in methionine formation. The polypeptide is 5-methyltetrahydropteroyltriglutamate--homocysteine methyltransferase (Pseudomonas putida (strain W619)).